The sequence spans 419 residues: MAPK/MAK/MRK overlapping kinase (419 aa).

The Protein kinase domain maps to 4–285; it reads YKAIGKIGEG…AHQALQHPYF (282 aa). Residues 10–18 and K33 each bind ATP; that span reads IGEGTFSEV. D128 serves as the catalytic Proton acceptor. 2 disordered regions span residues 285 to 344 and 390 to 419; these read FQEQ…RGPA and PASKKTDPQKDLKPAPQQCRLPTIVRKGGR. Basic and acidic residues-rich tracts occupy residues 322 to 338 and 393 to 402; these read KEGRKQKQSLKQEEDRP and KKTDPQKDLK.

Belongs to the protein kinase superfamily. CMGC Ser/Thr protein kinase family. CDC2/CDKX subfamily. It depends on Mg(2+) as a cofactor. In terms of processing, autophosphorylated. Expressed in heart, brain, lung, kidney, and pancreas, and at very low levels in placenta, liver and skeletal muscle. Detected in retina.

The protein resides in the cytoplasm. Its subcellular location is the cell projection. It is found in the cilium. It localises to the nucleus. The enzyme catalyses L-seryl-[protein] + ATP = O-phospho-L-seryl-[protein] + ADP + H(+). The catalysed reaction is L-threonyl-[protein] + ATP = O-phospho-L-threonyl-[protein] + ADP + H(+). With respect to regulation, phosphorylation appears to increase the enzymatic activity. Functionally, able to phosphorylate several exogenous substrates and to undergo autophosphorylation. Negatively regulates cilium length in a cAMP and mTORC1 signaling-dependent manner. This Homo sapiens (Human) protein is MAPK/MAK/MRK overlapping kinase (MOK).